The chain runs to 895 residues: Protein translocase subunit SecA (895 aa).

ATP-binding positions include Q86, 104-108 (GEGKT), and D494. 2 stretches are compositionally biased toward low complexity: residues 838-849 (AAATPPGFGAPP) and 870-882 (GDAA…TGNR). Positions 838-895 (AAATPPGFGAPPVRQQLQYSAPTAEGDVEVHAGDAAATDADTGNRAQRRANQRQQREV) are disordered.

It belongs to the SecA family. Monomer and homodimer. Part of the essential Sec protein translocation apparatus which comprises SecA, SecYEG and auxiliary proteins SecDF. Other proteins may also be involved.

It localises to the cell membrane. The protein localises to the cytoplasm. The catalysed reaction is ATP + H2O + cellular proteinSide 1 = ADP + phosphate + cellular proteinSide 2.. In terms of biological role, part of the Sec protein translocase complex. Interacts with the SecYEG preprotein conducting channel. Has a central role in coupling the hydrolysis of ATP to the transfer of proteins into and across the cell membrane, serving as an ATP-driven molecular motor driving the stepwise translocation of polypeptide chains across the membrane. This is Protein translocase subunit SecA from Kineococcus radiotolerans (strain ATCC BAA-149 / DSM 14245 / SRS30216).